The following is a 268-amino-acid chain: Glucosamine-6-phosphate deaminase (268 aa).

The active-site Proton acceptor; for enolization step is Asp-72. Asp-141 serves as the catalytic For ring-opening step. His-143 serves as the catalytic Proton acceptor; for ring-opening step. Glu-148 (for ring-opening step) is an active-site residue.

It belongs to the glucosamine/galactosamine-6-phosphate isomerase family. NagB subfamily. Homohexamer.

The catalysed reaction is alpha-D-glucosamine 6-phosphate + H2O = beta-D-fructose 6-phosphate + NH4(+). The protein operates within amino-sugar metabolism; N-acetylneuraminate degradation; D-fructose 6-phosphate from N-acetylneuraminate: step 5/5. Its activity is regulated as follows. Allosterically activated by N-acetylglucosamine 6-phosphate (GlcNAc6P). Its function is as follows. Catalyzes the reversible isomerization-deamination of glucosamine 6-phosphate (GlcN6P) to form fructose 6-phosphate (Fru6P) and ammonium ion. In Histophilus somni (strain 2336) (Haemophilus somnus), this protein is Glucosamine-6-phosphate deaminase.